A 296-amino-acid polypeptide reads, in one-letter code: Pseudouridine-5'-phosphate glycosidase (296 aa).

Catalysis depends on Glu21, which acts as the Proton donor. 2 residues coordinate substrate: Lys81 and Val101. Asp130 lines the Mn(2+) pocket. Ser132–Asp134 is a substrate binding site. Lys151 serves as the catalytic Nucleophile.

This sequence belongs to the pseudouridine-5'-phosphate glycosidase family. Homotrimer. Requires Mn(2+) as cofactor.

The catalysed reaction is D-ribose 5-phosphate + uracil = psi-UMP + H2O. Functionally, catalyzes the reversible cleavage of pseudouridine 5'-phosphate (PsiMP) to ribose 5-phosphate and uracil. Functions biologically in the cleavage direction, as part of a pseudouridine degradation pathway. The chain is Pseudouridine-5'-phosphate glycosidase from Fervidobacterium nodosum (strain ATCC 35602 / DSM 5306 / Rt17-B1).